Here is a 293-residue protein sequence, read N- to C-terminus: Insulin-like growth factor-binding protein 3 (293 aa).

The N-terminal stretch at 1–27 is a signal peptide; the sequence is MQRARPALWAAALIALALLRGPPAARA. The 84-residue stretch at 36–119 folds into the IGFBP N-terminal domain; it reads PVVRCEPCDA…LDGRGICANA (84 aa). Disulfide bonds link Cys-40/Cys-69, Cys-43/Cys-71, Cys-51/Cys-72, Cys-60/Cys-75, Cys-83/Cys-96, and Cys-90/Cys-116. N-linked (GlcNAc...) asparagine glycans are attached at residues Asn-118 and Asn-138. Disordered regions lie at residues 132-166 and 178-213; these read APPA…PDSK and KKGH…TEYG. Ser-150 is modified (phosphoserine). Over residues 178 to 192 the composition is skewed to basic and acidic residues; sequence KKGHAKDSQRYKVDY. Over residues 193–204 the composition is skewed to polar residues; the sequence is ESQSTDTQNFSS. Asn-201 is a glycosylation site (N-linked (GlcNAc...) asparagine). Position 203 is a phosphoserine (Ser-203). The Thyroglobulin type-1 domain occupies 212–287; it reads YGPCRREMED…DVKGKGDVHC (76 aa). Cystine bridges form between Cys-215/Cys-242, Cys-253/Cys-264, and Cys-266/Cys-287.

Interacts with XLKD1. Binds IGF2 more than IGF1. Forms a ternary complex of about 140 to 150 kDa with IGF1 or IGF2 and a 85 kDa glycoprotein (ALS). Interacts with humanin; humanin competes with importin KPNB1 for binding to IGFBP3, blocking IGFBP3 nuclear import and IGFBP3-mediated apoptosis. Interacts with TMEM219. Interacts with RXRA; this interaction modulates the transcriptional activity of RXRA. Interacts with LRP1; this interaction mediates cell growth inhibition independent of IGF1. Phosphorylated by FAM20C in the extracellular medium. Phosphorylated by CK2; resulting in decreased nuclear localization.

The protein localises to the secreted. It is found in the nucleus. Its function is as follows. Multifunctional protein that plays a critical role in regulating the availability of IGFs such as IGF1 and IGF2 to their receptors and thereby regulates IGF-mediated cellular processes including proliferation, differentiation, and apoptosis in a cell-type specific manner. Also exhibits IGF-independent antiproliferative and apoptotic effects mediated by its receptor TMEM219/IGFBP-3R. Inhibits the positive effect of humanin on insulin sensitivity. Promotes testicular germ cell apoptosis. Acts via LRP-1/alpha2M receptor, also known as TGF-beta type V receptor, to mediate cell growth inhibition independent of IGF1. Mechanistically, induces serine-specific dephosphorylation of IRS1 or IRS2 upon ligation to its receptor, leading to the inhibitory cascade. In the nucleus, interacts with transcription factors such as retinoid X receptor-alpha/RXRA to regulate transcriptional signaling and apoptosis. The chain is Insulin-like growth factor-binding protein 3 (IGFBP3) from Sus scrofa (Pig).